Here is a 296-residue protein sequence, read N- to C-terminus: Bidirectional sugar transporter SWEET13 (296 aa).

Residues 1–9 (MAGLSLQHP) lie on the Extracellular side of the membrane. Residues 10 to 30 (WAFAFGLLGNLISFTTYLAPI) traverse the membrane as a helical segment. The 86-residue stretch at 13–98 (AFGLLGNLIS…VMYLAYAPKK (86 aa)) folds into the MtN3/slv 1 domain. Over 31–45 (PTFYRIYKSKSTEGF) the chain is Cytoplasmic. Residues 46–66 (QSVPYVVALFSAMLWIFYALI) traverse the membrane as a helical segment. Over 67–71 (KSNEA) the chain is Extracellular. A helical membrane pass occupies residues 72–92 (LLITINAAGCVIETIYIVMYL). The Cytoplasmic segment spans residues 93 to 105 (AYAPKKAKVFTTK). The helical transmembrane segment at 106 to 126 (ILLLLNVGVFGVILLLTLLLS) threads the bilayer. The Extracellular portion of the chain corresponds to 127-133 (HGEQRVV). Residues 134–154 (SLGWVCVAFSVSVFVAPLSII) traverse the membrane as a helical segment. Residues 134-217 (SLGWVCVAFS…MGLYVFYMNA (84 aa)) form the MtN3/slv 2 domain. At 155-167 (KRVIQSRSVEYMP) the chain is on the cytoplasmic side. Residues 168–188 (FSLSLTLTLSAVVWFLYGLLI) form a helical membrane-spanning segment. At 189 to 192 (KDKY) the chain is on the extracellular side. A helical transmembrane segment spans residues 193 to 213 (VALPNILGFTFGVVQMGLYVF). At 214–296 (YMNATPVAGE…PPRAVEVAAV (83 aa)) the chain is on the cytoplasmic side.

The protein belongs to the SWEET sugar transporter family. Forms homooligomers and/or heterooligomers.

It localises to the cell membrane. Its function is as follows. Mediates both low-affinity uptake and efflux of sugar across the plasma membrane. Functionally, confers blight susceptibility. Confers TAL effector-mediated susceptibility to Xanthomonas oryzae pv. oryzae. The sequence is that of Bidirectional sugar transporter SWEET13 (SWEET13) from Oryza sativa subsp. japonica (Rice).